Consider the following 152-residue polypeptide: Aspartate carbamoyltransferase regulatory chain (152 aa).

Residues Cys-108, Cys-113, Cys-137, and Cys-140 each coordinate Zn(2+).

Belongs to the PyrI family. Contains catalytic and regulatory chains. The cofactor is Zn(2+).

In terms of biological role, involved in allosteric regulation of aspartate carbamoyltransferase. In Neisseria gonorrhoeae (strain ATCC 700825 / FA 1090), this protein is Aspartate carbamoyltransferase regulatory chain.